The chain runs to 66 residues: Cytochrome b-c1 complex subunit 9, mitochondrial (66 aa).

At 2 to 17 (SFSSLYKTFFKRNAVF) the chain is on the mitochondrial matrix side. The helical transmembrane segment at 18–43 (VGTIFAGAFVFQTVFDTAITSWYENH) threads the bilayer. The Mitochondrial intermembrane portion of the chain corresponds to 44 to 66 (NKGKLWKDVKARIAAGDGDDDDE).

The protein belongs to the UQCR10/QCR9 family. Component of the ubiquinol-cytochrome c oxidoreductase (cytochrome b-c1 complex, complex III, CIII), a multisubunit enzyme composed of 10 subunits. The complex is composed of 3 respiratory subunits cytochrome b (COB), cytochrome c1 (CYT1) and Rieske protein (RIP1), 2 core protein subunits COR1 and QCR2, and 5 low-molecular weight protein subunits QCR6, QCR7, QCR8, QCR9 and QCR10. The complex exists as an obligatory dimer and forms supercomplexes (SCs) in the inner mitochondrial membrane with a monomer or a dimer of cytochrome c oxidase (complex IV, CIV), resulting in 2 different assemblies (supercomplexes III(2)IV and III(2)IV(2)). Interacts with the transmembrane segment of RIP1.

The protein resides in the mitochondrion inner membrane. Component of the ubiquinol-cytochrome c oxidoreductase, a multisubunit transmembrane complex that is part of the mitochondrial electron transport chain which drives oxidative phosphorylation. The respiratory chain contains 3 multisubunit complexes succinate dehydrogenase (complex II, CII), ubiquinol-cytochrome c oxidoreductase (cytochrome b-c1 complex, complex III, CIII) and cytochrome c oxidase (complex IV, CIV), that cooperate to transfer electrons derived from NADH and succinate to molecular oxygen, creating an electrochemical gradient over the inner membrane that drives transmembrane transport and the ATP synthase. The cytochrome b-c1 complex catalyzes electron transfer from ubiquinol to cytochrome c, linking this redox reaction to translocation of protons across the mitochondrial inner membrane, with protons being carried across the membrane as hydrogens on the quinol. In the process called Q cycle, 2 protons are consumed from the matrix, 4 protons are released into the intermembrane space and 2 electrons are passed to cytochrome c. The protein is Cytochrome b-c1 complex subunit 9, mitochondrial (QCR9) of Saccharomyces cerevisiae (strain ATCC 204508 / S288c) (Baker's yeast).